Here is a 360-residue protein sequence, read N- to C-terminus: UDP-N-acetylglucosamine--N-acetylmuramyl-(pentapeptide) pyrophosphoryl-undecaprenol N-acetylglucosamine transferase (360 aa).

UDP-N-acetyl-alpha-D-glucosamine contacts are provided by residues 15 to 17 (TGG), N127, R163, S191, I249, 268 to 273 (ALTVSE), and Q293.

The protein belongs to the glycosyltransferase 28 family. MurG subfamily.

The protein resides in the cell inner membrane. The catalysed reaction is di-trans,octa-cis-undecaprenyl diphospho-N-acetyl-alpha-D-muramoyl-L-alanyl-D-glutamyl-meso-2,6-diaminopimeloyl-D-alanyl-D-alanine + UDP-N-acetyl-alpha-D-glucosamine = di-trans,octa-cis-undecaprenyl diphospho-[N-acetyl-alpha-D-glucosaminyl-(1-&gt;4)]-N-acetyl-alpha-D-muramoyl-L-alanyl-D-glutamyl-meso-2,6-diaminopimeloyl-D-alanyl-D-alanine + UDP + H(+). It functions in the pathway cell wall biogenesis; peptidoglycan biosynthesis. In terms of biological role, cell wall formation. Catalyzes the transfer of a GlcNAc subunit on undecaprenyl-pyrophosphoryl-MurNAc-pentapeptide (lipid intermediate I) to form undecaprenyl-pyrophosphoryl-MurNAc-(pentapeptide)GlcNAc (lipid intermediate II). This chain is UDP-N-acetylglucosamine--N-acetylmuramyl-(pentapeptide) pyrophosphoryl-undecaprenol N-acetylglucosamine transferase, found in Proteus mirabilis (strain HI4320).